The chain runs to 291 residues: ATP synthase gamma chain (291 aa).

Belongs to the ATPase gamma chain family. F-type ATPases have 2 components, CF(1) - the catalytic core - and CF(0) - the membrane proton channel. CF(1) has five subunits: alpha(3), beta(3), gamma(1), delta(1), epsilon(1). CF(0) has three main subunits: a, b and c.

The protein localises to the cell inner membrane. Its function is as follows. Produces ATP from ADP in the presence of a proton gradient across the membrane. The gamma chain is believed to be important in regulating ATPase activity and the flow of protons through the CF(0) complex. The protein is ATP synthase gamma chain of Cupriavidus metallidurans (strain ATCC 43123 / DSM 2839 / NBRC 102507 / CH34) (Ralstonia metallidurans).